Reading from the N-terminus, the 326-residue chain is tRNA-modifying protein YgfZ (326 aa).

Folate-binding residues include tryptophan 27 and tryptophan 189.

This sequence belongs to the tRNA-modifying YgfZ family.

It is found in the cytoplasm. Its function is as follows. Folate-binding protein involved in regulating the level of ATP-DnaA and in the modification of some tRNAs. It is probably a key factor in regulatory networks that act via tRNA modification, such as initiation of chromosomal replication. This Escherichia coli O139:H28 (strain E24377A / ETEC) protein is tRNA-modifying protein YgfZ.